Reading from the N-terminus, the 454-residue chain is Tyrosine aminotransferase (454 aa).

The residue at position 1 (Met-1) is an N-acetylmethionine. Position 280 is an N6-(pyridoxal phosphate)lysine (Lys-280). A Phosphoserine modification is found at Ser-448.

Belongs to the class-I pyridoxal-phosphate-dependent aminotransferase family. As to quaternary structure, homodimer. It depends on pyridoxal 5'-phosphate as a cofactor.

It carries out the reaction L-tyrosine + 2-oxoglutarate = 3-(4-hydroxyphenyl)pyruvate + L-glutamate. Its pathway is amino-acid degradation; L-phenylalanine degradation; acetoacetate and fumarate from L-phenylalanine: step 2/6. Its function is as follows. Transaminase involved in tyrosine breakdown. Converts tyrosine to p-hydroxyphenylpyruvate. Can catalyze the reverse reaction, using glutamic acid, with 2-oxoglutarate as cosubstrate (in vitro). Has much lower affinity and transaminase activity towards phenylalanine. The sequence is that of Tyrosine aminotransferase (TAT) from Homo sapiens (Human).